A 203-amino-acid polypeptide reads, in one-letter code: DNA-directed RNA polymerase subunit gamma (203 aa).

Positions 34, 36, 49, and 52 each coordinate Zn(2+).

Belongs to the RNA polymerase beta' chain family. RpoC1 subfamily. As to quaternary structure, in cyanobacteria the RNAP catalytic core is composed of 2 alpha, 1 beta, 1 beta', 1 gamma and 1 omega subunit. When a sigma factor is associated with the core the holoenzyme is formed, which can initiate transcription. Zn(2+) serves as cofactor.

The catalysed reaction is RNA(n) + a ribonucleoside 5'-triphosphate = RNA(n+1) + diphosphate. Functionally, DNA-dependent RNA polymerase catalyzes the transcription of DNA into RNA using the four ribonucleoside triphosphates as substrates. The polypeptide is DNA-directed RNA polymerase subunit gamma (rpoC1) (Prochloron sp).